Consider the following 448-residue polypeptide: Protein TraN (448 aa).

Disordered regions lie at residues Asn-243 to Glu-273 and Glu-411 to Ser-448. The segment covering Gly-246–Ser-261 has biased composition (low complexity). The span at Pro-262 to Ser-271 shows a compositional bias: polar residues. A compositionally biased stretch (basic and acidic residues) spans Arg-421 to Arg-437. Over residues Ser-438–Ser-448 the composition is skewed to polar residues.

This sequence to H.influenzae HI_1407.

In Escherichia coli, this protein is Protein TraN (traN).